The sequence spans 534 residues: MFSWVSKDARRKKEPELFQTVAEGLRQLYAQKLLPLEEHYRFHEFHSPALEDADFDNKPMVLLVGQYSTGKTTFIRHLIEQDFPGMRIGPEPTTDSFIAVMHGPTEGVVPGNALVVDPRRPFRKLNAFGNAFLNRFMCAQLPNPVLDSISIIDTPGILSGEKQRISRGYDFAAVLEWFAERVDRIILLFDAHKLDISDEFSEVIKALKNHEDKIRVVLNKADQIETQQLMRVYGALMWSLGKIINTPEVVRVYIGSFWSHPLLIPDNRKLFEAEEQDLFKDIQSLPRNAALRKLNDLIKRARLAKVHAYIISSLKKEMPNVFGKESKKKELVNNLGEIYQKIEREHQISPGDFPSLRKMQELLQTQDFSKFQALKPKLLDTVDDMLANDIARLMVMVRQEESLMPSQVVKGGAFDGTMNGPFGHGYGEGAGEGIDDVEWVVGKDKPTYDEIFYTLSPVNGKITGANAKKEMVKSKLPNTVLGKIWKLADVDKDGLLDDEEFALANHLIKVKLEGHELPADLPPHLVPPSKRRHE.

M1 bears the N-acetylmethionine mark. The 232-residue stretch at F55–P286 folds into the Dynamin-type G domain. The segment at G65–T72 is G1 motif. G65–T72 contacts ATP. Residues E91–P92 form a G2 motif region. A G3 motif region spans residues D153 to G156. A coiled-coil region spans residues D198–Q227. A G4 motif region spans residues N219–D222. ATP is bound at residue K220. Position 243 (I243) is a region of interest, G5 motif. W258 serves as a coordination point for ATP. Phosphoserine is present on residues S355 and S456. The EH domain occupies D444–R532. The EF-hand domain occupies L476–K511. Ca(2+)-binding residues include D489, D491, D493, and E500.

The protein belongs to the TRAFAC class dynamin-like GTPase superfamily. Dynamin/Fzo/YdjA family. EHD subfamily. In terms of assembly, homooligomer, and heterooligomer with EHD2, EHD3 and EHD4, ATP-binding is required for heterooligomerization. Interacts (via EH domain) with MICALL1 (via NPF1 motif); the interaction is direct and recruits EHD1 to membranes. Interacts with RAB35; the interaction is indirect through MICALL1 and recruits EHD1 to membranes. Interacts (via EH domain) with PACSIN2 (via NPF motifs); regulates localization to tubular recycling endosome membranes. Interacts with PACSIN1. Interacts with RAB8A. Interacts with FER1L5 (via second C2 domain). Interacts with MYOF. Interacts with ZFYVE20. Interacts (via EH domain) with RAB11FIP2.

Its subcellular location is the recycling endosome membrane. The protein localises to the early endosome membrane. It localises to the cell membrane. It is found in the cell projection. The protein resides in the cilium membrane. Its function is as follows. ATP- and membrane-binding protein that controls membrane reorganization/tubulation upon ATP hydrolysis. Acts in early endocytic membrane fusion and membrane trafficking of recycling endosomes. Recruited to endosomal membranes upon nerve growth factor stimulation, indirectly regulates neurite outgrowth. Plays a role in myoblast fusion. Involved in the unidirectional retrograde dendritic transport of endocytosed BACE1 and in efficient sorting of BACE1 to axons implicating a function in neuronal APP processing. Plays a role in the formation of the ciliary vesicle (CV), an early step in cilium biogenesis. Proposed to be required for the fusion of distal appendage vesicles (DAVs) to form the CV by recruiting SNARE complex component SNAP29. Is required for recruitment of transition zone proteins CEP290, RPGRIP1L, TMEM67 and B9D2, and of IFT20 following DAV reorganization before Rab8-dependent ciliary membrane extension. Required for the loss of CCP110 form the mother centriole essential for the maturation of the basal body during ciliogenesis. The polypeptide is EH domain-containing protein 1 (Pongo abelii (Sumatran orangutan)).